The chain runs to 41 residues: Antifungal peptide 2 (41 aa).

A Pyrrolidone carboxylic acid modification is found at Q1. 5 disulfides stabilise this stretch: C3–C17, C7–C37, C11–C23, C16–C30, and C35–C39. The Chitin-binding type-1 domain maps to 4–41 (ASRCPRPCNAGLCCSIYGYCGSGAAYCGAGNCRCQCRG).

As to quaternary structure, monomer.

Has antifungal activity against P.infestans, A.lycopersici, V.dahliae, G.zeae, A.nicotianae, F.moniliforme, F.oxysporum and C.gossypii. This is Antifungal peptide 2 from Eucommia ulmoides (Hardy rubber tree).